Here is a 624-residue protein sequence, read N- to C-terminus: Pentatricopeptide repeat-containing protein At2g32630 (624 aa).

PPR repeat units lie at residues 153–187 (FEKFFDLVFRVYVDNGMFEEGLRVFDYMVKKGLSI), 188–222 (DERSCIVFLVAAKKRRRIDLCLEIFRRMVDSGVKI), 223–257 (TVYSLTIVVEGLCRRGEVEKSKKLIKEFSVKGIKP), 258–292 (EAYTYNTIINAYVKQRDFSGVEGVLKVMKKDGVVY), 293–327 (NKVTYTLLMELSVKNGKMSDAEKLFDEMRERGIES), 328–362 (DVHVYTSLISWNCRKGNMKRAFLLFDELTEKGLSP), 363–397 (SSYTYGALIDGVCKVGEMGAAEILMNEMQSKGVNI), 398–432 (TQVVFNTLIDGYCRKGMVDEASMIYDVMEQKGFQA), 433–467 (DVFTCNTIASCFNRLKRYDEAKQWLFRMMEGGVKL), 468–502 (STVSYTNLIDVYCKEGNVEEAKRLFVEMSSKGVQP), 503–537 (NAITYNVMIYAYCKQGKIKEARKLRANMEANGMDP), 538–572 (DSYTYTSLIHGECIADNVDEAMRLFSEMGLKGLDQ), and 573–607 (NSVTYTVMISGLSKAGKSDEAFGLYDEMKRKGYTI).

Belongs to the PPR family. P subfamily.

The chain is Pentatricopeptide repeat-containing protein At2g32630 from Arabidopsis thaliana (Mouse-ear cress).